We begin with the raw amino-acid sequence, 285 residues long: Urease accessory protein UreD 1 (285 aa).

This sequence belongs to the UreD family. UreD, UreF and UreG form a complex that acts as a GTP-hydrolysis-dependent molecular chaperone, activating the urease apoprotein by helping to assemble the nickel containing metallocenter of UreC. The UreE protein probably delivers the nickel.

It is found in the cytoplasm. Its function is as follows. Required for maturation of urease via the functional incorporation of the urease nickel metallocenter. This chain is Urease accessory protein UreD 1, found in Pseudomonas syringae pv. syringae (strain B728a).